The chain runs to 474 residues: Coiled-coil domain-containing protein 6 (474 aa).

Over residues 1–10 (MADSASESDT) the composition is skewed to acidic residues. Residues 1 to 47 (MADSASESDTDGAGGNSSSSAAMQSSCSSTSGGGGGGGGGGGGGKSG) form a disordered region. An N-acetylalanine modification is found at Ala-2. The span at 16–30 (NSSSSAAMQSSCSST) shows a compositional bias: low complexity. Positions 31-47 (SGGGGGGGGGGGGGKSG) are enriched in gly residues. Ser-52 is subject to Phosphoserine. Residues 53–237 (PFRLEELTNR…KRILQEKLDQ (185 aa)) are a coiled coil. Tandem repeats lie at residues 106-134 (EQEE…AVNY), 135-163 (EKEE…EQHL), and 164-192 (EQEQ…QLTL). The 5 X 29 AA tandem repeats stretch occupies residues 106–235 (EQEEEFISNT…AEKRILQEKL (130 aa)). Residues 193-206 (EQLRREKIDLENTL) form a 4; approximate repeat. The stretch at 207-235 (EQEQEALVNRLWKRMDKLEAEKRILQEKL) is repeat 5. Phosphoserine is present on residues Ser-240, Ser-244, Ser-249, Ser-254, Ser-284, and Ser-323. Residues 253-332 (DSPENMMRHI…SESESSLEMD (80 aa)) are a coiled coil. Residues 342-369 (AQGLRPRTVSSPIPYTPSPSSSRPISPG) form a disordered region. Residue Thr-349 is modified to Phosphothreonine. The span at 351–368 (SSPIPYTPSPSSSRPISP) shows a compositional bias: low complexity. 2 positions are modified to phosphoserine: Ser-363 and Ser-367. Position 387 is an omega-N-methylarginine (Arg-387). Phosphoserine is present on residues Ser-395 and Ser-413. Residues 397–474 (GLHVQHMGTS…QHSAHPSSQP (78 aa)) form a disordered region. The span at 426–451 (PTPPPSPNTQTPVQPPPPPPPPPMQP) shows a compositional bias: pro residues. Positions 442 to 451 (PPPPPPPMQP) match the SH3-binding motif. Positions 459 to 474 (SQPTPSQHSAHPSSQP) are enriched in low complexity.

As to expression, ubiquitously expressed.

The protein localises to the cytoplasm. It localises to the cytoskeleton. This chain is Coiled-coil domain-containing protein 6 (CCDC6), found in Homo sapiens (Human).